The following is a 323-amino-acid chain: Beta-ketoacyl-[acyl-carrier-protein] synthase III (323 aa).

Residues cysteine 113 and histidine 250 contribute to the active site. The ACP-binding stretch occupies residues glutamine 251–arginine 255. Residue asparagine 280 is part of the active site.

It belongs to the thiolase-like superfamily. FabH family. Homodimer.

The protein localises to the cytoplasm. It carries out the reaction malonyl-[ACP] + acetyl-CoA + H(+) = 3-oxobutanoyl-[ACP] + CO2 + CoA. Its pathway is lipid metabolism; fatty acid biosynthesis. Its function is as follows. Catalyzes the condensation reaction of fatty acid synthesis by the addition to an acyl acceptor of two carbons from malonyl-ACP. Catalyzes the first condensation reaction which initiates fatty acid synthesis and may therefore play a role in governing the total rate of fatty acid production. Possesses both acetoacetyl-ACP synthase and acetyl transacylase activities. Its substrate specificity determines the biosynthesis of branched-chain and/or straight-chain of fatty acids. The sequence is that of Beta-ketoacyl-[acyl-carrier-protein] synthase III from Brucella melitensis biotype 2 (strain ATCC 23457).